A 253-amino-acid chain; its full sequence is Probable transcriptional regulatory protein Tery_2125 (253 aa).

The protein belongs to the TACO1 family.

It localises to the cytoplasm. The chain is Probable transcriptional regulatory protein Tery_2125 from Trichodesmium erythraeum (strain IMS101).